The following is a 307-amino-acid chain: MAAITAGLVKELRDKTGAGMMDCKAALTENNGDIEAAIDWLRKKGLAKAAKKAGRVAAEGLVAVESSGHYAAAIEVNAETDFVARNADFQAFVREAAKVALNTDGSIEAVAAAHFPGESVTVADKLATLIATIGENMTLRRSVRLTVSAGVIATYVHGAVSEGQGRIGVLVALESQGDVEKLSTLGRQIAMHVAALNPLALDASGIDEATIAREKAILLEKHQGKPANVQEKIAESGMKTYFKEVTLLEQPFVHDGSKSVAQVLKENEGSVGAPITLKGFVRYALGEGIEKEESDFAAEVAAAAGQS.

Residues 80 to 83 (TDFV) are involved in Mg(2+) ion dislocation from EF-Tu.

It belongs to the EF-Ts family.

Its subcellular location is the cytoplasm. Associates with the EF-Tu.GDP complex and induces the exchange of GDP to GTP. It remains bound to the aminoacyl-tRNA.EF-Tu.GTP complex up to the GTP hydrolysis stage on the ribosome. The protein is Elongation factor Ts of Azorhizobium caulinodans (strain ATCC 43989 / DSM 5975 / JCM 20966 / LMG 6465 / NBRC 14845 / NCIMB 13405 / ORS 571).